The following is a 438-amino-acid chain: Alpha-methylserine aldolase (438 aa).

Lys-252 carries the post-translational modification N6-(pyridoxal phosphate)lysine.

The protein belongs to the SHMT family. Alpha-methylserine aldolase subfamily. In terms of assembly, homodimer. Pyridoxal 5'-phosphate is required as a cofactor.

The catalysed reaction is 2-methyl-L-serine = formaldehyde + L-alanine. In the alpha-methyl-L-serine synthesis reaction, activity is inhibited by an excess amount of formaldehyde (at a concentration greater than 10 mM). Catalyzes the reversible interconversion of alpha-methyl-L-serine to L-alanine and formaldehyde. Cannot use alpha-methyl-D-serine, L-serine or D-serine. Cannot use D-alanine instead of L-alanine as the substrate for alpha-methyl-L-serine synthesis. Does not require tetrahydrofolate (THF) for activity. This is Alpha-methylserine aldolase from Ralstonia sp.